Reading from the N-terminus, the 200-residue chain is Oligoribonuclease (200 aa).

Positions 5–169 constitute an Exonuclease domain; it reads MVWIDCEMTG…ADIRESIAEL (165 aa). The active site involves Y126.

Belongs to the oligoribonuclease family.

Its subcellular location is the cytoplasm. Functionally, 3'-to-5' exoribonuclease specific for small oligoribonucleotides. This is Oligoribonuclease from Streptomyces coelicolor (strain ATCC BAA-471 / A3(2) / M145).